The following is a 264-amino-acid chain: Elongation factor Ts (264 aa).

The involved in Mg(2+) ion dislocation from EF-Tu stretch occupies residues 76-79 (TDFV).

Belongs to the EF-Ts family.

The protein resides in the cytoplasm. Associates with the EF-Tu.GDP complex and induces the exchange of GDP to GTP. It remains bound to the aminoacyl-tRNA.EF-Tu.GTP complex up to the GTP hydrolysis stage on the ribosome. The chain is Elongation factor Ts from Deinococcus radiodurans (strain ATCC 13939 / DSM 20539 / JCM 16871 / CCUG 27074 / LMG 4051 / NBRC 15346 / NCIMB 9279 / VKM B-1422 / R1).